A 593-amino-acid polypeptide reads, in one-letter code: Tyrosine-protein phosphatase non-receptor type 11 (593 aa).

SH2 domains are found at residues 6 to 102 and 112 to 216; these read WFHP…KYPL and WFHG…KQPL. The Tyrosine-protein phosphatase domain occupies 247 to 521; the sequence is FWEEFETLQQ…RFIYMAVQHY (275 aa). Residues Asp425, 459-465, and Gln506 contribute to the substrate site; that span reads CSAGIGR. Cys459 (phosphocysteine intermediate) is an active-site residue. A compositionally biased stretch (polar residues) spans 548 to 557; sequence SLSDQTSGDQ. A disordered region spans residues 548–575; the sequence is SLSDQTSGDQSPLPPCTPTPTCPEMRED. Pro residues predominate over residues 559–568; that stretch reads PLPPCTPTPT.

This sequence belongs to the protein-tyrosine phosphatase family. Non-receptor class 2 subfamily. In terms of processing, phosphorylated by tyrosine-protein kinases. As to expression, expressed in embryonic fibroblast, hematopoietic, erythroid, myeloid and lymphoid cells.

The protein resides in the cytoplasm. It carries out the reaction O-phospho-L-tyrosyl-[protein] + H2O = L-tyrosyl-[protein] + phosphate. Functionally, this PTPase activity may directly link growth factor receptors and other signaling proteins through protein-tyrosine phosphorylation. The SH2 regions may interact with other cellular components to modulate its own phosphatase activity against interacting substrates. May play a positive role during the stages of erythroid cell proliferation. This chain is Tyrosine-protein phosphatase non-receptor type 11 (PTPN11), found in Gallus gallus (Chicken).